Reading from the N-terminus, the 856-residue chain is Inactive rhomboid protein 1 (856 aa).

The disordered stretch occupies residues 1–21 (MGEARRDSSSSLQHKKPPWLK). At 1–412 (MGEARRDSSS…HRPFFTYWLT (412 aa)) the chain is on the cytoplasmic side. Residues Ser-76 and Ser-176 each carry the phosphoserine modification. Phosphothreonine is present on residues Thr-180 and Thr-183. Ser-391 is subject to Phosphoserine. Residues 413 to 433 (FVHSLVTILAVCIYGVAPVGF) form a helical membrane-spanning segment. Topologically, residues 434–656 (SQHETVDSVL…NPEVPDQFYR (223 aa)) are lumenal. An N-linked (GlcNAc...) asparagine glycan is attached at Asn-584. Residues 657–677 (LWLSLFLHAGVLHCLVSVCFQ) traverse the membrane as a helical segment. Over 678–692 (MTVLRDLEKLAGWHR) the chain is Cytoplasmic. Residues 693–713 (IAIIYLLSGVTGNLASAIFLP) traverse the membrane as a helical segment. Residues 714–715 (YR) lie on the Lumenal side of the membrane. A helical membrane pass occupies residues 716 to 736 (AEVGPAGSQFGILACLFVELF). The Cytoplasmic portion of the chain corresponds to 737–747 (QSWQILARPWR). The helical transmembrane segment at 748-768 (AFFKLLAVVLFLFTFGLLPWI) threads the bilayer. The Lumenal segment spans residues 769 to 773 (DNFAH). A helical membrane pass occupies residues 774–794 (ISGFISGLFLSFAFLPYISFG). Over 795–804 (KFDLYRKRCQ) the chain is Cytoplasmic. A helical transmembrane segment spans residues 805 to 825 (IIVFQLVFLGLLAGLVVLFYF). Residues 826 to 856 (YPVRCEWCEFLTCIPFTDKFCEKYELDAQLH) are Lumenal-facing.

This sequence belongs to the peptidase S54 family. Homodimer, or homooligomer. Interacts with TGFA and HBEGF. Interacts with EGF; may retain EGF in the endoplasmic reticulum and regulates its degradation through the endoplasmic reticulum-associated degradation (ERAD). Interacts (via cytoplasmic N-terminus) with FRMD8/iTAP; this interaction leads to mutual protein stabilization. Interacts with ADAM17/TACE.

Its subcellular location is the endoplasmic reticulum membrane. The protein resides in the golgi apparatus membrane. Functionally, regulates ADAM17 protease, a sheddase of the epidermal growth factor (EGF) receptor ligands and TNF, thereby plays a role in sleep, cell survival, proliferation, migration and inflammation. Does not exhibit any protease activity on its own. This chain is Inactive rhomboid protein 1 (RHBDF1), found in Bos taurus (Bovine).